Reading from the N-terminus, the 412-residue chain is MEERPSETNSNVDSSAQPSVAQLAGRFREHAAVARETPASKPTRRKPPCSLPLFPPKVELGQNGEEKSPSGASHPPKIKVKSSPLIEKLQANLAFDPAALLPGASPKSPGLKAIVSPFHSPPSTPSSPGIRSHPSEAEEVPVSFDQPPEGTHLPSYNKVRTRGSIKRRPPSRRFRRSQSDCGDFRDYRAVEPSQENGAREENGDDVFASKSKDPGSPQLNQEAMADGVEGTPWSAEKPRRRNTCNSTEKPEELVRTPEEANAGEKVGQNPDTASQGHPEVQAPSQTGSPEAENGCGSPREETTPGEHTDTGKATEGTASEERVADEDRLGQKSPDANMPEEEGVVREKAPQTSSGKAEGTTIAEPDTKQKEEAPLEPSCSPGADHAAGEITSEIQNEKAVSMDDIPIEDTRM.

Disordered stretches follow at residues 1–84 (MEER…KSSP) and 99–412 (ALLP…DTRM). The span at 7–20 (ETNSNVDSSAQPSV) shows a compositional bias: polar residues. Residues Ser-68, Ser-82, Ser-83, Ser-105, Ser-108, Ser-116, Ser-120, and Ser-123 each carry the phosphoserine modification. Thr-124 carries the post-translational modification Phosphothreonine. Residues Ser-126, Ser-127, Ser-135, and Ser-143 each carry the phosphoserine modification. Residues 159 to 176 (VRTRGSIKRRPPSRRFRR) are compositionally biased toward basic residues. Phosphoserine is present on residues Ser-177, Ser-179, and Ser-216. 2 positions are modified to phosphothreonine: Thr-243 and Thr-256. Positions 248-258 (EKPEELVRTPE) are enriched in basic and acidic residues. At Ser-297 the chain carries Phosphoserine. Basic and acidic residues-rich tracts occupy residues 298 to 312 (PREE…DTGK) and 319 to 330 (SEERVADEDRLG). 2 positions are modified to phosphoserine: Ser-333 and Ser-401.

Interacts with CAPZA2 and CAPZB. Dephosphorylation results in its dissociation from CAPZA2.

Its function is as follows. Stress-induced phosphorylation of CAPZIP may regulate the ability of F-actin-capping protein to remodel actin filament assembly. This Mus musculus (Mouse) protein is CapZ-interacting protein (Rcsd1).